Reading from the N-terminus, the 252-residue chain is Short-chain dehydrogenase/reductase eriH (252 aa).

NADP(+)-binding residues include Ile16, Asp65, Asn92, Lys125, Tyr158, Lys162, Val191, and Thr193. Tyr158 acts as the Proton acceptor in catalysis. Tyr158 acts as the Proton donor in catalysis. Catalysis depends on Lys162, which acts as the Lowers pKa of active site Tyr.

The protein belongs to the short-chain dehydrogenases/reductases (SDR) family.

It catalyses the reaction cyathadiol + reduced [NADPH--hemoprotein reductase] + O2 = cyathatriol + oxidized [NADPH--hemoprotein reductase] + H2O + H(+). It carries out the reaction 11-O-acetylcyathatriol + A = 11-O-acetylcyathin A3 + AH2. The catalysed reaction is cyathatriol + A = cyathin A3 + AH2. The protein operates within secondary metabolite biosynthesis. Its function is as follows. Short-chain dehydrogenase/reductase; part of the gene cluster that mediates the biosynthesis of erinacines, cyathane-xylosides that show unique biological activities, including leishmanicidal activity, stimulating activity for nerve growth-factor synthesis, and agonistic activity toward the kappa opioid receptor. Within the pathway, eriH works with eriA to catalyze C-11 hydroxylation of cyathadiol to produce cyathatriol. EriH also catalyzes oxidation of 11-O-acetyl-cyathatriol into 1-O-acetylcyathin A3. In the absence of eriL and eriJ, the SDR eriH is able to convert cyathatriol to cyathin A3; this is likely a switching mechanism in the biosynthesis of cyathins (C-14 ketogroup)and erinacines (C-14 glycosylated group). The first step of the erinacines biosynthesis pathway is catalyzed by the geranylgeranyl diphosphate (GGPP) synthase eriE via conversion of farnesyl pyrophosphate and isopentyl pyrophosphate into geranylgeranyl pyrophosphate (GGPP). GGPP is then substrate of the diterpene cyclase eriG for the production of cyatha-3,12-diene. The cytochrome P450 monooxygenase eriI then hydroxylates cyatha-3,12-diene at C-14 of the seven-membered ring to produce erinacol, which is further hydroxylated at C-15 by the cytochrome P450 monooxygenase eriC to yield cyathadiol. The cytochrome P450 monooxygenase eriA then catalyzes C-11 hydroxylation in the presence of the short chain dehydrogenase/reductase (SDR) eriH, which leads to the production of cyathatriol. The acetyltransferase eriL converts cyathatriol into 11-O-acetyl-cyathatriol. The SDR eriH catalyzes further oxidation of 11-O-acetyl-cyathatriol into 1-O-acetylcyathin A3. Finally, the glycosyl transferase eriJ tranfers xylose from UDP-xylose onto C-14 of 11-O-acetyl-cyathatriol to form eracine Q. EriJ is also able to convert 11-O-acetyl-cyathatriol to eracine Q2 by using UDP-D-glucose as cosubstrate, but at a lower rate. This is Short-chain dehydrogenase/reductase eriH from Hericium erinaceus (Lion's mane mushroom).